A 214-amino-acid chain; its full sequence is Isochorismatase family protein 2B (214 aa).

Belongs to the isochorismatase family.

The chain is Isochorismatase family protein 2B from Dictyostelium discoideum (Social amoeba).